We begin with the raw amino-acid sequence, 146 residues long: Ribosome-binding factor A (146 aa).

The segment at 125–146 (RDLDADDDKTKDDRAKDDKDSE) is disordered.

The protein belongs to the RbfA family. Monomer. Binds 30S ribosomal subunits, but not 50S ribosomal subunits or 70S ribosomes.

The protein resides in the cytoplasm. Functionally, one of several proteins that assist in the late maturation steps of the functional core of the 30S ribosomal subunit. Associates with free 30S ribosomal subunits (but not with 30S subunits that are part of 70S ribosomes or polysomes). Required for efficient processing of 16S rRNA. May interact with the 5'-terminal helix region of 16S rRNA. The protein is Ribosome-binding factor A of Mesorhizobium japonicum (strain LMG 29417 / CECT 9101 / MAFF 303099) (Mesorhizobium loti (strain MAFF 303099)).